The primary structure comprises 181 residues: Probable RNA 2'-phosphotransferase (181 aa).

The protein belongs to the KptA/TPT1 family.

Its function is as follows. Removes the 2'-phosphate from RNA via an intermediate in which the phosphate is ADP-ribosylated by NAD followed by a presumed transesterification to release the RNA and generate ADP-ribose 1''-2''-cyclic phosphate (APPR&gt;P). May function as an ADP-ribosylase. This chain is Probable RNA 2'-phosphotransferase, found in Nostoc punctiforme (strain ATCC 29133 / PCC 73102).